A 78-amino-acid polypeptide reads, in one-letter code: Large ribosomal subunit protein bL28 (78 aa).

The tract at residues 1–23 (MSRVCQVTGKRPITGNNVSHSKR) is disordered.

The protein belongs to the bacterial ribosomal protein bL28 family.

The polypeptide is Large ribosomal subunit protein bL28 (Marinomonas sp. (strain MWYL1)).